The sequence spans 127 residues: MNQTIKVKKKKKTITLGVVHIRASFNNTIVTFTDIQGNTISSASAGSNGFKGARKATPYAAQVTIDRASEKAKEYGLKTISIRIGGPGAQRESAMRALFGQNFVVTSILDVSSIAHNGVRPPKRRRV.

The protein belongs to the universal ribosomal protein uS11 family. As to quaternary structure, part of the 30S ribosomal subunit. Interacts with proteins S7 and S18. Binds to IF-3.

In terms of biological role, located on the platform of the 30S subunit, it bridges several disparate RNA helices of the 16S rRNA. Forms part of the Shine-Dalgarno cleft in the 70S ribosome. The chain is Small ribosomal subunit protein uS11 from Rickettsia canadensis (strain McKiel).